The primary structure comprises 277 residues: Proteasome subunit beta type-7 (277 aa).

A propeptide spans 1 to 43 (MAAVSVFQAPVGGFSFDNCRRNAVLEADFAKKGFKLPKARKTG) (removed in mature form). Thr44 (nucleophile) is an active-site residue.

The protein belongs to the peptidase T1B family. As to quaternary structure, the 26S proteasome consists of a 20S proteasome core and two 19S regulatory subunits. The 20S proteasome core is a barrel-shaped complex made of 28 subunits that are arranged in four stacked rings. The two outer rings are each formed by seven alpha subunits, and the two inner rings are formed by seven beta subunits. The proteolytic activity is exerted by three beta-subunits PSMB5, PSMB6 and PSMB7.

The protein localises to the cytoplasm. The protein resides in the nucleus. It catalyses the reaction Cleavage of peptide bonds with very broad specificity.. Component of the 20S core proteasome complex involved in the proteolytic degradation of most intracellular proteins. This complex plays numerous essential roles within the cell by associating with different regulatory particles. Associated with two 19S regulatory particles, forms the 26S proteasome and thus participates in the ATP-dependent degradation of ubiquitinated proteins. The 26S proteasome plays a key role in the maintenance of protein homeostasis by removing misfolded or damaged proteins that could impair cellular functions, and by removing proteins whose functions are no longer required. Associated with the PA200 or PA28, the 20S proteasome mediates ubiquitin-independent protein degradation. This type of proteolysis is required in several pathways including spermatogenesis (20S-PA200 complex) or generation of a subset of MHC class I-presented antigenic peptides (20S-PA28 complex). Within the 20S core complex, PSMB7 displays a trypsin-like activity. The sequence is that of Proteasome subunit beta type-7 (Psmb7) from Rattus norvegicus (Rat).